The chain runs to 68 residues: MNLKNLRKKNKKELNNELLNLLREQFNLRMQAGNGQLQHTHLLKEVRKNLAYVKMLINEEKKGRNNNG.

It belongs to the universal ribosomal protein uL29 family.

In Wigglesworthia glossinidia brevipalpis, this protein is Large ribosomal subunit protein uL29.